A 510-amino-acid chain; its full sequence is NAD(P) transhydrogenase subunit alpha (510 aa).

Residues 1 to 401 are Cytoplasmic-facing; the sequence is MRIGIPRERL…EEKCTCSPWR (401 aa). Residues 120 to 122, Val-175, 195 to 197, Glu-238, and Leu-257 contribute to the NAD(+) site; these read RIS and DTR. 2 consecutive transmembrane segments (helical) span residues 402 to 422 and 423 to 443; these read KYAL…VAPK and EFLG…YVVW. Residues 444–452 are Cytoplasmic-facing; the sequence is NVSHALHTP. Residues 453 to 473 form a helical membrane-spanning segment; it reads LMSVTNAISGIIVVGALLQIG. Over 474 to 476 the chain is Periplasmic; the sequence is QGG. The helical transmembrane segment at 477 to 497 threads the bilayer; sequence WVSFLSFIAVLIASINIFGGF. The Cytoplasmic segment spans residues 498–510; the sequence is TVTQRMLKMFRKN.

This sequence belongs to the AlaDH/PNT family. Heterodimer of an alpha (PntA) and a beta (PntB) chain. Alpha subunit serves as the dimerization unit.

It localises to the cell inner membrane. The catalysed reaction is NAD(+) + NADPH + H(+)(in) = NADH + NADP(+) + H(+)(out). Functionally, the transhydrogenation between NADH and NADP is coupled to respiration and ATP hydrolysis and functions as a proton pump across the membrane. In Escherichia coli (strain K12), this protein is NAD(P) transhydrogenase subunit alpha (pntA).